The sequence spans 81 residues: Dermaseptin-S6 (81 aa).

The first 22 residues, 1-22, serve as a signal peptide directing secretion; it reads MDILKKSLFFILFLGLVSLSIS. The tract at residues 22–49 is disordered; that stretch reads SEEEKRENEDEEDQEDDEQSEEKRGLWS. Positions 23–45 are excised as a propeptide; it reads EEEKRENEDEEDQEDDEQSEEKR. Residues 30 to 41 are compositionally biased toward acidic residues; it reads EDEEDQEDDEQS. Isoleucine 78 is modified (isoleucine amide). A propeptide spanning residues 80 to 81 is cleaved from the precursor; the sequence is EQ.

The protein belongs to the frog skin active peptide (FSAP) family. Dermaseptin subfamily. In terms of tissue distribution, expressed by the skin glands.

The protein resides in the secreted. Antimicrobial peptide. In Phyllomedusa sauvagei (Sauvage's leaf frog), this protein is Dermaseptin-S6.